Consider the following 189-residue polypeptide: Tetratricopeptide repeat protein 36 (189 aa).

TPR repeat units lie at residues 51–84 (SKAL…LPER), 86–118 (SAYN…SGGR), and 123–156 (RQSF…GSPF).

Belongs to the TTC36 family.

The protein is Tetratricopeptide repeat protein 36 (TTC36) of Homo sapiens (Human).